Here is a 178-residue protein sequence, read N- to C-terminus: Large ribosomal subunit protein uL6 (178 aa).

This sequence belongs to the universal ribosomal protein uL6 family. As to quaternary structure, part of the 50S ribosomal subunit.

In terms of biological role, this protein binds to the 23S rRNA, and is important in its secondary structure. It is located near the subunit interface in the base of the L7/L12 stalk, and near the tRNA binding site of the peptidyltransferase center. This is Large ribosomal subunit protein uL6 from Micrococcus luteus (Micrococcus lysodeikticus).